Reading from the N-terminus, the 640-residue chain is Threonine--tRNA ligase (640 aa).

The TGS domain maps to 1–61 (MPIITLPDGS…DHDATLQIIT (61 aa)). Residues 242-533 (DHRKLGKRLD…LIEHYEGAFP (292 aa)) are catalytic. Zn(2+) is bound by residues Cys-333, His-384, and His-510.

It belongs to the class-II aminoacyl-tRNA synthetase family. Homodimer. It depends on Zn(2+) as a cofactor.

The protein resides in the cytoplasm. The catalysed reaction is tRNA(Thr) + L-threonine + ATP = L-threonyl-tRNA(Thr) + AMP + diphosphate + H(+). Its function is as follows. Catalyzes the attachment of threonine to tRNA(Thr) in a two-step reaction: L-threonine is first activated by ATP to form Thr-AMP and then transferred to the acceptor end of tRNA(Thr). Also edits incorrectly charged L-seryl-tRNA(Thr). This is Threonine--tRNA ligase from Azotobacter vinelandii (strain DJ / ATCC BAA-1303).